Here is a 271-residue protein sequence, read N- to C-terminus: MAYVSMKQMLETGVHFGHQTRRWNPKMRPFIFGARNGIHIIDLQQTVKLFRTAHDKVVDTVVNGGKVVFIGTKRQAQEAVAVEAGRAGQFYVTNRWMGGTLTNFTTIQKSIDRLKKLEAMFADGTVNKYQKKEILRMQREMDKLLATLGGIKEMDRLPQLAFIVDPHREDIAVKECRKLGIPIVAVTDTNCDPDLIDFVIPGNDDAIRAIKLFVAAIADACLEGDAMRKERKGKDAEEELKKAAAPKAAPAAEAAPAAEAPAAPVVEAAAE.

Residues 229 to 242 are compositionally biased toward basic and acidic residues; sequence KERKGKDAEEELKK. The interval 229 to 271 is disordered; sequence KERKGKDAEEELKKAAAPKAAPAAEAAPAAEAPAAPVVEAAAE. Residues 243-271 are compositionally biased toward low complexity; that stretch reads AAAPKAAPAAEAAPAAEAPAAPVVEAAAE.

The protein belongs to the universal ribosomal protein uS2 family.

The chain is Small ribosomal subunit protein uS2 from Nitratidesulfovibrio vulgaris (strain DSM 19637 / Miyazaki F) (Desulfovibrio vulgaris).